Reading from the N-terminus, the 511-residue chain is RNA polymerase principal sigma factor HrdB (511 aa).

The disordered stretch occupies residues 72 to 186; the sequence is SAAEPKRTRK…AATEEPEGTE (115 aa). A compositionally biased stretch (basic residues) spans 78 to 93; that stretch reads RTRKSVAAKSPAKRTA. Positions 94–121 are enriched in low complexity; the sequence is TKAVAAKPVTSRKATAPAAPAAPATEPA. A compositionally biased stretch (basic residues) spans 132–158; it reads AAAKKTTAKKATAKKTTAKKAAAKKTT. A binds RNA polymerase-binding protein RbpA region spans residues 211 to 347; the sequence is TADPVKDYLK…ITRAMADQAR (137 aa). The tract at residues 278–348 is sigma-70 factor domain-2; sequence LLEANLRLVV…TRAMADQART (71 aa). The Interaction with polymerase core subunit RpoC motif lies at 302–305; sequence DLIQ. Residues 357–433 are sigma-70 factor domain-3; sequence EVINKLARVQ…DSEAVVPADA (77 aa). Positions 446-499 are sigma-70 factor domain-4; that stretch reads VLDTLSEREAGVVSMRFGLTDGQPKTLDEIGKVYGVTRERIRQIESKTMSKLRH. Residues 472 to 491 constitute a DNA-binding region (H-T-H motif); it reads LDEIGKVYGVTRERIRQIES.

It belongs to the sigma-70 factor family. As to quaternary structure, homotrimer (Potential). interacts transiently with the RNA polymerase core complex. Interacts with RNA polymerase-binding protein RbpA via its sigma-2 region (residues 211-347) in a free form.

Functionally, sigma factors are initiation factors that promote the attachment of RNA polymerase to specific initiation sites and are then released. This sigma factor is the primary sigma factor during exponential growth. Its activity is stimulated by RbpA. This Streptomyces coelicolor (strain ATCC BAA-471 / A3(2) / M145) protein is RNA polymerase principal sigma factor HrdB (hrdB).